Here is a 515-residue protein sequence, read N- to C-terminus: Zinc-binding protein AdcA (515 aa).

The N-terminal stretch at 1–28 is a signal peptide; the sequence is MKKKILLMMSLISVFFAWQLTQAKQVLA. Position 66 (His-66) interacts with Zn(2+). The interval 125 to 148 is disordered; the sequence is DHHHEDADKKHEHNKHSEEGHNHA. Residues 129 to 148 are his-rich loop; sequence EDADKKHEHNKHSEEGHNHA. Zn(2+)-binding residues include His-152, His-216, and Glu-291.

This sequence belongs to the bacterial solute-binding protein 9 family.

Functionally, part of the ATP-binding cassette (ABC) transport system AdcABC involved in zinc import. Binds zinc with high affinity and specificity and delivers it to the membrane permease for translocation into the cytoplasm. The sequence is that of Zinc-binding protein AdcA (adcA) from Streptococcus pyogenes serotype M1.